The primary structure comprises 282 residues: Succinate dehydrogenase [ubiquinone] iron-sulfur subunit, mitochondrial (282 aa).

The N-terminal 26 residues, 1–26 (MAAVVFSLRRSGPVLRLSGALQVSRG), are a transit peptide targeting the mitochondrion. The 2Fe-2S ferredoxin-type domain occupies 42–135 (KKFAIYRWDP…VSKIYPLPHM (94 aa)). [2Fe-2S] cluster is bound by residues C95, C100, C103, and C115. Residues 178-208 (DRDKLDGLYECILCACCSTSCPSYWWNADKY) enclose the 4Fe-4S ferredoxin-type domain. [4Fe-4S] cluster contacts are provided by C188, C191, and C194. Residue C198 coordinates [3Fe-4S] cluster. W203 lines the a ubiquinone pocket. [3Fe-4S] cluster is bound by residues C245 and C251. C255 contacts [4Fe-4S] cluster.

The protein belongs to the succinate dehydrogenase/fumarate reductase iron-sulfur protein family. As to quaternary structure, component of complex II composed of four subunits: the flavoprotein (FP) sdha, iron-sulfur protein (IP) sdhb, and a cytochrome b composed of sdhc and sdhd. It depends on [2Fe-2S] cluster as a cofactor. The cofactor is [3Fe-4S] cluster. [4Fe-4S] cluster serves as cofactor.

It localises to the mitochondrion inner membrane. The catalysed reaction is a quinone + succinate = fumarate + a quinol. The enzyme catalyses (R)-malate + a quinone = enol-oxaloacetate + a quinol. It carries out the reaction (S)-malate + a quinone = enol-oxaloacetate + a quinol. It functions in the pathway carbohydrate metabolism; tricarboxylic acid cycle; fumarate from succinate (eukaryal route): step 1/1. Enol-oxaloacetate inhibits the succinate dehydrogenase activity. Functionally, iron-sulfur protein (IP) subunit of the succinate dehydrogenase complex (mitochondrial respiratory chain complex II), responsible for transferring electrons from succinate to ubiquinone (coenzyme Q). SDH also oxidizes malate to the non-canonical enol form of oxaloacetate, enol-oxaloacetate. Enol-oxaloacetate, which is a potent inhibitor of the succinate dehydrogenase activity, is further isomerized into keto-oxaloacetate. In Xenopus laevis (African clawed frog), this protein is Succinate dehydrogenase [ubiquinone] iron-sulfur subunit, mitochondrial (sdhb).